A 308-amino-acid polypeptide reads, in one-letter code: Protoheme IX farnesyltransferase (308 aa).

The next 8 membrane-spanning stretches (helical) occupy residues 20-40 (LLAYLALTKPRVIELLLVTAI), 50-70 (AIHPLLMLNTLVGGMMAATGA), 102-122 (NALALGLTLTVISFFWLWCAT), 124-144 (LLAGVLALVTVAFYVFVYTLW), 149-169 (TSQNVVWGGAAGCMPVMIGWS), 170-190 (AITGTIAWPALAMFAIIFFWT), 227-249 (LIYTWLTVAATLVLALATSWLYG), and 288-308 (YLAVVFCALAVDSVIALPTLH).

This sequence belongs to the UbiA prenyltransferase family. Protoheme IX farnesyltransferase subfamily.

The protein resides in the cell membrane. It catalyses the reaction heme b + (2E,6E)-farnesyl diphosphate + H2O = Fe(II)-heme o + diphosphate. It functions in the pathway porphyrin-containing compound metabolism; heme O biosynthesis; heme O from protoheme: step 1/1. Converts heme B (protoheme IX) to heme O by substitution of the vinyl group on carbon 2 of heme B porphyrin ring with a hydroxyethyl farnesyl side group. In Mycobacterium bovis (strain BCG / Pasteur 1173P2), this protein is Protoheme IX farnesyltransferase.